The following is a 404-amino-acid chain: Tryptophan synthase beta chain (404 aa).

K94 is modified (N6-(pyridoxal phosphate)lysine).

Belongs to the TrpB family. As to quaternary structure, tetramer of two alpha and two beta chains. Requires pyridoxal 5'-phosphate as cofactor.

It catalyses the reaction (1S,2R)-1-C-(indol-3-yl)glycerol 3-phosphate + L-serine = D-glyceraldehyde 3-phosphate + L-tryptophan + H2O. It participates in amino-acid biosynthesis; L-tryptophan biosynthesis; L-tryptophan from chorismate: step 5/5. Functionally, the beta subunit is responsible for the synthesis of L-tryptophan from indole and L-serine. This chain is Tryptophan synthase beta chain, found in Staphylococcus aureus (strain MRSA252).